A 298-amino-acid chain; its full sequence is GTPase Era (298 aa).

The Era-type G domain occupies 8-176; sequence RCGRIAVIGR…VSDLLALLPE (169 aa). A G1 region spans residues 16 to 23; sequence GRPNVGKS. 16–23 is a binding site for GTP; the sequence is GRPNVGKS. The interval 42-46 is G2; that stretch reads QTTRH. The segment at 63–66 is G3; that stretch reads DTPG. GTP contacts are provided by residues 63–67 and 125–128; these read DTPGL and NKID. The segment at 125 to 128 is G4; that stretch reads NKID. The segment at 155 to 157 is G5; sequence VSA. The 85-residue stretch at 199-283 folds into the KH type-2 domain; it reads VREQVMRQLG…FLETWVRVRK (85 aa).

Belongs to the TRAFAC class TrmE-Era-EngA-EngB-Septin-like GTPase superfamily. Era GTPase family. As to quaternary structure, monomer.

The protein localises to the cytoplasm. It localises to the cell inner membrane. In terms of biological role, an essential GTPase that binds both GDP and GTP, with rapid nucleotide exchange. Plays a role in 16S rRNA processing and 30S ribosomal subunit biogenesis and possibly also in cell cycle regulation and energy metabolism. This Xylella fastidiosa (strain M12) protein is GTPase Era.